Consider the following 538-residue polypeptide: Dihomomethionine N-hydroxylase (538 aa).

Residues Leu8–Leu28 form a helical membrane-spanning segment.

Belongs to the cytochrome P450 family. Heme serves as cofactor. Highly expressed in cotyledons, leaves, stems and siliques. Detected in flowers and lateral roots, but not in the main root. Expressed only in the vascular bundles in apical plant parts.

The protein localises to the endoplasmic reticulum membrane. The enzyme catalyses an L-polyhomomethionine + 2 reduced [NADPH--hemoprotein reductase] + 2 O2 = an (E)-omega-(methylsulfanyl)-alkanal oxime + 2 oxidized [NADPH--hemoprotein reductase] + CO2 + 3 H2O + 2 H(+). It catalyses the reaction L-dihomomethionine + 2 reduced [NADPH--hemoprotein reductase] + 2 O2 = (E)-5-(methylsulfanyl)pentanal oxime + 2 oxidized [NADPH--hemoprotein reductase] + CO2 + 3 H2O + 2 H(+). It carries out the reaction L-trihomomethionine + 2 reduced [NADPH--hemoprotein reductase] + 2 O2 = (E)-6-(methylsulfanyl)hexanal oxime + 2 oxidized [NADPH--hemoprotein reductase] + CO2 + 3 H2O + 2 H(+). Its function is as follows. Catalyzes the conversion of the short chain elongated methionines di-, tri-, and tetrahomomethionine to their respective aldoximes 5-methylthiopentanaldoxime, 6-methylthiohexanaldoxime, and 7-methylheptanaldoxime. The chain is Dihomomethionine N-hydroxylase (CYP79F1) from Arabidopsis thaliana (Mouse-ear cress).